A 712-amino-acid polypeptide reads, in one-letter code: Copper amine oxidase 1 (712 aa).

319 to 330 (AFDLGEYGAGYL) lines the substrate pocket. Residue Asp-321 is the Proton acceptor of the active site. An intrachain disulfide couples Cys-340 to Cys-366. 404 to 409 (AANYEY) contacts substrate. Residue Tyr-407 is the Schiff-base intermediate with substrate; via topaquinone of the active site. The residue at position 407 (Tyr-407) is a 2',4',5'-topaquinone. Residues His-458 and His-460 each contribute to the Cu cation site. Mn(2+) is bound by residues Asp-616 and Ile-617. His-627 is a binding site for Cu cation.

This sequence belongs to the copper/topaquinone oxidase family. In terms of assembly, homodimer. It depends on Cu cation as a cofactor. Zn(2+) is required as a cofactor. L-topaquinone serves as cofactor. Requires Mn(2+) as cofactor. In terms of processing, topaquinone (TPQ) is generated by copper-dependent autoxidation of a specific tyrosyl residue.

It is found in the cytoplasm. The catalysed reaction is a primary methyl amine + O2 + H2O = an aldehyde + H2O2 + NH4(+). Functionally, copper amine oxidase involved in the metabolism of xenobiotic and biogenic amines. Capable of catalyzing the oxidative deamination of primary amines such as ethylamine as alternate sources of nitrogen to support growth. This is Copper amine oxidase 1 (cao1) from Schizosaccharomyces pombe (strain 972 / ATCC 24843) (Fission yeast).